The chain runs to 369 residues: tRNA 2-selenouridine synthase (369 aa).

A Rhodanese domain is found at 12-136; the sequence is FLDDIPLMDV…LRNFLFETTR (125 aa). The active-site S-selanylcysteine intermediate is cysteine 95.

Belongs to the SelU family. In terms of assembly, monomer.

It catalyses the reaction 5-methylaminomethyl-2-thiouridine(34) in tRNA + selenophosphate + (2E)-geranyl diphosphate + H2O + H(+) = 5-methylaminomethyl-2-selenouridine(34) in tRNA + (2E)-thiogeraniol + phosphate + diphosphate. The catalysed reaction is 5-methylaminomethyl-2-thiouridine(34) in tRNA + (2E)-geranyl diphosphate = 5-methylaminomethyl-S-(2E)-geranyl-thiouridine(34) in tRNA + diphosphate. It carries out the reaction 5-methylaminomethyl-S-(2E)-geranyl-thiouridine(34) in tRNA + selenophosphate + H(+) = 5-methylaminomethyl-2-(Se-phospho)selenouridine(34) in tRNA + (2E)-thiogeraniol. The enzyme catalyses 5-methylaminomethyl-2-(Se-phospho)selenouridine(34) in tRNA + H2O = 5-methylaminomethyl-2-selenouridine(34) in tRNA + phosphate. In terms of biological role, involved in the post-transcriptional modification of the uridine at the wobble position (U34) of tRNA(Lys), tRNA(Glu) and tRNA(Gln). Catalyzes the conversion of 2-thiouridine (S2U-RNA) to 2-selenouridine (Se2U-RNA). Acts in a two-step process involving geranylation of 2-thiouridine (S2U) to S-geranyl-2-thiouridine (geS2U) and subsequent selenation of the latter derivative to 2-selenouridine (Se2U) in the tRNA chain. This Pseudomonas aeruginosa (strain ATCC 15692 / DSM 22644 / CIP 104116 / JCM 14847 / LMG 12228 / 1C / PRS 101 / PAO1) protein is tRNA 2-selenouridine synthase.